A 546-amino-acid polypeptide reads, in one-letter code: CTP synthase (546 aa).

Residues 1 to 266 are amidoligase domain; sequence MTTNYIFVTG…DELVCKRFGI (266 aa). Serine 14 contacts CTP. Serine 14 lines the UTP pocket. Residues 15-20 and aspartate 72 contribute to the ATP site; that span reads SLGKGI. Positions 72 and 140 each coordinate Mg(2+). CTP-binding positions include 147-149, 187-192, and lysine 223; these read DIE and KTKPTQ. Residues 187–192 and lysine 223 each bind UTP; that span reads KTKPTQ. Residue 239–241 participates in ATP binding; sequence RDV. In terms of domain architecture, Glutamine amidotransferase type-1 spans 291 to 542; it reads TIGMVGKYIE…VKAAGEFQRG (252 aa). Glycine 352 is a binding site for L-glutamine. Cysteine 379 acts as the Nucleophile; for glutamine hydrolysis in catalysis. L-glutamine is bound by residues 380 to 383, glutamate 403, and arginine 470; that span reads LGMQ. Residues histidine 515 and glutamate 517 contribute to the active site.

The protein belongs to the CTP synthase family. As to quaternary structure, homotetramer.

The catalysed reaction is UTP + L-glutamine + ATP + H2O = CTP + L-glutamate + ADP + phosphate + 2 H(+). It carries out the reaction L-glutamine + H2O = L-glutamate + NH4(+). The enzyme catalyses UTP + NH4(+) + ATP = CTP + ADP + phosphate + 2 H(+). The protein operates within pyrimidine metabolism; CTP biosynthesis via de novo pathway; CTP from UDP: step 2/2. Its activity is regulated as follows. Allosterically activated by GTP, when glutamine is the substrate; GTP has no effect on the reaction when ammonia is the substrate. The allosteric effector GTP functions by stabilizing the protein conformation that binds the tetrahedral intermediate(s) formed during glutamine hydrolysis. Inhibited by the product CTP, via allosteric rather than competitive inhibition. Catalyzes the ATP-dependent amination of UTP to CTP with either L-glutamine or ammonia as the source of nitrogen. Regulates intracellular CTP levels through interactions with the four ribonucleotide triphosphates. The chain is CTP synthase from Vibrio atlanticus (strain LGP32) (Vibrio splendidus (strain Mel32)).